We begin with the raw amino-acid sequence, 115 residues long: NADH-ubiquinone oxidoreductase chain 3 (115 aa).

The next 3 membrane-spanning stretches (helical) occupy residues 3 to 23 (FVLA…ITFW), 55 to 75 (FFLV…LLPL), and 84 to 104 (LPLM…GLTY).

Belongs to the complex I subunit 3 family. As to quaternary structure, core subunit of respiratory chain NADH dehydrogenase (Complex I) which is composed of 45 different subunits. Interacts with TMEM186. Interacts with TMEM242.

The protein resides in the mitochondrion inner membrane. The catalysed reaction is a ubiquinone + NADH + 5 H(+)(in) = a ubiquinol + NAD(+) + 4 H(+)(out). Functionally, core subunit of the mitochondrial membrane respiratory chain NADH dehydrogenase (Complex I) which catalyzes electron transfer from NADH through the respiratory chain, using ubiquinone as an electron acceptor. Essential for the catalytic activity of complex I. The sequence is that of NADH-ubiquinone oxidoreductase chain 3 from Pongo abelii (Sumatran orangutan).